The following is a 201-amino-acid chain: Potassium-transporting ATPase KdpC subunit (201 aa).

A helical membrane pass occupies residues 9–29 (ILVMLALTLITGLLYPLAMTV). 2 stretches are compositionally biased toward polar residues: residues 73–84 (TTAADPNDSTKT) and 91–101 (AANSSGSNLGP). Positions 73 to 103 (TTAADPNDSTKTVPAPYNAANSSGSNLGPTS) are disordered.

The protein belongs to the KdpC family. The system is composed of three essential subunits: KdpA, KdpB and KdpC.

It is found in the cell inner membrane. Functionally, part of the high-affinity ATP-driven potassium transport (or Kdp) system, which catalyzes the hydrolysis of ATP coupled with the electrogenic transport of potassium into the cytoplasm. This subunit acts as a catalytic chaperone that increases the ATP-binding affinity of the ATP-hydrolyzing subunit KdpB by the formation of a transient KdpB/KdpC/ATP ternary complex. This is Potassium-transporting ATPase KdpC subunit from Bradyrhizobium sp. (strain BTAi1 / ATCC BAA-1182).